A 331-amino-acid polypeptide reads, in one-letter code: Probable transaldolase (331 aa).

The Schiff-base intermediate with substrate role is filled by Lys-142.

Belongs to the transaldolase family. Type 1 subfamily. Homodimer.

The protein localises to the cytoplasm. The catalysed reaction is D-sedoheptulose 7-phosphate + D-glyceraldehyde 3-phosphate = D-erythrose 4-phosphate + beta-D-fructose 6-phosphate. The protein operates within carbohydrate degradation; pentose phosphate pathway; D-glyceraldehyde 3-phosphate and beta-D-fructose 6-phosphate from D-ribose 5-phosphate and D-xylulose 5-phosphate (non-oxidative stage): step 2/3. In terms of biological role, transaldolase is important for the balance of metabolites in the pentose-phosphate pathway. This chain is Probable transaldolase, found in Drosophila melanogaster (Fruit fly).